Consider the following 369-residue polypeptide: Maltose/maltodextrin import ATP-binding protein MalK (369 aa).

Residues 4–234 (VQLRNVTKAW…PADRFVAGFI (231 aa)) form the ABC transporter domain. 36–43 (GPSGCGKS) provides a ligand contact to ATP.

The protein belongs to the ABC transporter superfamily. Maltooligosaccharide importer (TC 3.A.1.1.1) family. In terms of assembly, the complex is composed of two ATP-binding proteins (MalK), two transmembrane proteins (MalG and MalK) and a solute-binding protein (MalE).

The protein resides in the cell inner membrane. It carries out the reaction D-maltose(out) + ATP + H2O = D-maltose(in) + ADP + phosphate + H(+). Functionally, part of the ABC transporter complex MalEFGK involved in maltose/maltodextrin import. Responsible for energy coupling to the transport system. This chain is Maltose/maltodextrin import ATP-binding protein MalK, found in Salmonella typhi.